The chain runs to 371 residues: 4-hydroxy-3-methylbut-2-en-1-yl diphosphate synthase (flavodoxin) (371 aa).

[4Fe-4S] cluster is bound by residues Cys-272, Cys-275, Cys-307, and Glu-314.

This sequence belongs to the IspG family. [4Fe-4S] cluster serves as cofactor.

It catalyses the reaction (2E)-4-hydroxy-3-methylbut-2-enyl diphosphate + oxidized [flavodoxin] + H2O + 2 H(+) = 2-C-methyl-D-erythritol 2,4-cyclic diphosphate + reduced [flavodoxin]. It functions in the pathway isoprenoid biosynthesis; isopentenyl diphosphate biosynthesis via DXP pathway; isopentenyl diphosphate from 1-deoxy-D-xylulose 5-phosphate: step 5/6. Functionally, converts 2C-methyl-D-erythritol 2,4-cyclodiphosphate (ME-2,4cPP) into 1-hydroxy-2-methyl-2-(E)-butenyl 4-diphosphate. This chain is 4-hydroxy-3-methylbut-2-en-1-yl diphosphate synthase (flavodoxin), found in Pseudomonas aeruginosa (strain LESB58).